Consider the following 38-residue polypeptide: U9-ctenitoxin-Pk1a (38 aa).

4 disulfide bridges follow: cysteine 2–cysteine 17, cysteine 9–cysteine 22, cysteine 16–cysteine 36, and cysteine 24–cysteine 34.

As to expression, expressed by the venom gland.

The protein resides in the secreted. The polypeptide is U9-ctenitoxin-Pk1a (Phoneutria keyserlingi (Brazilian wandering spider)).